The sequence spans 250 residues: Putative beta-carotene-binding protein (250 aa).

Deposited in the epidermis and cuticle of male locusts during their sexual maturation.

In terms of biological role, has beta-carotene-binding activity. May be involved in the transport of carotenes from internal tissues to epidermis and cuticle of the locust. The polypeptide is Putative beta-carotene-binding protein (Schistocerca gregaria (Desert locust)).